The primary structure comprises 625 residues: Endoglucanase 13 (625 aa).

A signal peptide spans 1-34 (MAATMNKTPATTFLLIPAAASLVLLLAAAASVEA). The active-site Nucleophile is D91. Residue H427 is part of the active site. Residue N440 is glycosylated (N-linked (GlcNAc...) asparagine). Catalysis depends on residues D479 and E488. The segment at 509 to 530 (ADNTPEYTPAPNAPSPSNGGSP) is disordered.

It belongs to the glycosyl hydrolase 9 (cellulase E) family.

Its subcellular location is the secreted. It carries out the reaction Endohydrolysis of (1-&gt;4)-beta-D-glucosidic linkages in cellulose, lichenin and cereal beta-D-glucans.. The chain is Endoglucanase 13 (GLU6) from Oryza sativa subsp. indica (Rice).